The following is a 213-amino-acid chain: Octanoyltransferase (213 aa).

Residues 32-207 (ESTLDEIWLV…NILALLNNPD (176 aa)) enclose the BPL/LPL catalytic domain. Substrate-binding positions include 71-78 (RGGQVTYH), 138-140 (SLG), and 151-153 (GLA). The active-site Acyl-thioester intermediate is the C169.

This sequence belongs to the LipB family.

Its subcellular location is the cytoplasm. It catalyses the reaction octanoyl-[ACP] + L-lysyl-[protein] = N(6)-octanoyl-L-lysyl-[protein] + holo-[ACP] + H(+). The protein operates within protein modification; protein lipoylation via endogenous pathway; protein N(6)-(lipoyl)lysine from octanoyl-[acyl-carrier-protein]: step 1/2. In terms of biological role, catalyzes the transfer of endogenously produced octanoic acid from octanoyl-acyl-carrier-protein onto the lipoyl domains of lipoate-dependent enzymes. Lipoyl-ACP can also act as a substrate although octanoyl-ACP is likely to be the physiological substrate. This is Octanoyltransferase from Escherichia coli O17:K52:H18 (strain UMN026 / ExPEC).